A 1006-amino-acid polypeptide reads, in one-letter code: 5'-3' exoribonuclease 2 (1006 aa).

Coiled coils occupy residues 256-287 (FAQD…NSEQ) and 453-544 (RLKK…AESE). The required for retention in the nucleus stretch occupies residues 492–529 (DDAVSKANKTNFNLAEVMKQKIINKKHRLEKDNEEEEI). Basic and acidic residues predominate over residues 561-575 (DRENSETTEVSRDSP). Disordered regions lie at residues 561-584 (DREN…NVSE) and 939-1006 (HNYG…ANRR). Position 574 is a phosphoserine (Ser-574). Residues 939–956 (HNYGRNSYNSQPGFNNSR) show a composition bias toward polar residues. Tandem repeats lie at residues 955 to 958 (SRYD), 961 to 964 (NNNY), 972 to 974 (NNN), 975 to 978 (YSGN), 984 to 986 (YSG), and 996 to 999 (SRYD). A 2 X 4 AA repeats of S-R-Y-D, N-N-N-Y, Y-S-G-N region spans residues 955–999 (SRYDGGNNNYRQNSNYRNNNYSGNRNSGQYSGNSYSRNNKQSRYD). Residues 959–993 (GGNNNYRQNSNYRNNNYSGNRNSGQYSGNSYSRNN) are compositionally biased toward low complexity. Basic and acidic residues predominate over residues 996 to 1006 (SRYDNSRANRR).

Belongs to the 5'-3' exonuclease family. XRN2/RAT1 subfamily. In terms of assembly, interacts with RAI1 and RTT103. Mg(2+) is required as a cofactor. Requires Mn(2+) as cofactor.

Its subcellular location is the nucleus. Inhibited by nucleoside 3', 5'-bisphosphates. Possesses 5'-&gt;3' exoribonuclease activity. Required for the processing of nuclear mRNA, rRNA and small nucleolar RNA (snoRNA) precursors. May promote termination of transcription by RNA polymerase II via the recruitment of 3'-end processing factors to the poly(A) site and by the degradation of nascent RNA downstream of the poly(A) site. In Saccharomyces cerevisiae (strain ATCC 204508 / S288c) (Baker's yeast), this protein is 5'-3' exoribonuclease 2 (RAT1).